Reading from the N-terminus, the 313-residue chain is Porphobilinogen deaminase (313 aa).

Position 242 is an S-(dipyrrolylmethanemethyl)cysteine (Cys242).

This sequence belongs to the HMBS family. Monomer. The cofactor is dipyrromethane.

It carries out the reaction 4 porphobilinogen + H2O = hydroxymethylbilane + 4 NH4(+). Its pathway is porphyrin-containing compound metabolism; protoporphyrin-IX biosynthesis; coproporphyrinogen-III from 5-aminolevulinate: step 2/4. Tetrapolymerization of the monopyrrole PBG into the hydroxymethylbilane pre-uroporphyrinogen in several discrete steps. This chain is Porphobilinogen deaminase, found in Yersinia pseudotuberculosis serotype O:3 (strain YPIII).